The sequence spans 240 residues: 6-carboxyhexanoate--CoA ligase (240 aa).

It belongs to the BioW family. In terms of assembly, homodimer. Mg(2+) serves as cofactor.

The enzyme catalyses heptanedioate + ATP + CoA = 6-carboxyhexanoyl-CoA + AMP + diphosphate. The protein operates within metabolic intermediate metabolism; pimeloyl-CoA biosynthesis; pimeloyl-CoA from pimelate: step 1/1. Catalyzes the transformation of pimelate into pimeloyl-CoA with concomitant hydrolysis of ATP to AMP. The polypeptide is 6-carboxyhexanoate--CoA ligase (Aquifex aeolicus (strain VF5)).